A 126-amino-acid chain; its full sequence is Large ribosomal subunit protein bL19 (126 aa).

It belongs to the bacterial ribosomal protein bL19 family.

Functionally, this protein is located at the 30S-50S ribosomal subunit interface and may play a role in the structure and function of the aminoacyl-tRNA binding site. The sequence is that of Large ribosomal subunit protein bL19 from Bradyrhizobium diazoefficiens (strain JCM 10833 / BCRC 13528 / IAM 13628 / NBRC 14792 / USDA 110).